The primary structure comprises 296 residues: MRVRTFCFSLVCALGASTYLLWRGWLQLSLPAGSYGVMRSRSGGYHHALIAPGRFLWRWEPLLPSNAELFAFELKKQTVSVTVQDVLPAAKEYAQLLDQHAPFDWTLALSARVALKEAFLLDTVQRERITDQNSLERYVDTTAQAALTQVSHDFIARCMADPALYERVHTQYGLATRELKRAIEKEIPHCAISEVVLSEVHIPDMVLYHTAEQAYRAFEAKRSEHLSALAQQAAKRSALENFEMQRLTKWGEFFQRYPSVIDFLNAIRQDGASTLETLKKGSTASHRAIPHEETTR.

Residues 7–26 traverse the membrane as a helical segment; it reads CFSLVCALGASTYLLWRGWL.

The protein localises to the membrane. This is an uncharacterized protein from Treponema pallidum (strain Nichols).